Here is a 322-residue protein sequence, read N- to C-terminus: Acetyl-coenzyme A carboxylase carboxyl transferase subunit beta (322 aa).

Positions 24–293 (LWIKCPDTGQ…PAVEEPAVVD (270 aa)) constitute a CoA carboxyltransferase N-terminal domain.

Belongs to the AccD/PCCB family. As to quaternary structure, acetyl-CoA carboxylase is a heterohexamer composed of biotin carboxyl carrier protein (AccB), biotin carboxylase (AccC) and two subunits each of ACCase subunit alpha (AccA) and ACCase subunit beta (AccD).

It localises to the cytoplasm. It catalyses the reaction N(6)-carboxybiotinyl-L-lysyl-[protein] + acetyl-CoA = N(6)-biotinyl-L-lysyl-[protein] + malonyl-CoA. It functions in the pathway lipid metabolism; malonyl-CoA biosynthesis; malonyl-CoA from acetyl-CoA: step 1/1. Component of the acetyl coenzyme A carboxylase (ACC) complex. Biotin carboxylase (BC) catalyzes the carboxylation of biotin on its carrier protein (BCCP) and then the CO(2) group is transferred by the transcarboxylase to acetyl-CoA to form malonyl-CoA. This is Acetyl-coenzyme A carboxylase carboxyl transferase subunit beta from Rhodopseudomonas palustris (strain HaA2).